Consider the following 142-residue polypeptide: Large ribosomal subunit protein uL16 (142 aa).

Belongs to the universal ribosomal protein uL16 family. Part of the 50S ribosomal subunit.

Its function is as follows. Binds 23S rRNA and is also seen to make contacts with the A and possibly P site tRNAs. The protein is Large ribosomal subunit protein uL16 of Pseudothermotoga lettingae (strain ATCC BAA-301 / DSM 14385 / NBRC 107922 / TMO) (Thermotoga lettingae).